We begin with the raw amino-acid sequence, 88 residues long: Apolipoprotein C-I (88 aa).

The signal sequence occupies residues 1 to 26 (MRLFIALPVLIVVVAMALEGPAPAQA).

It belongs to the apolipoprotein C1 family.

It localises to the secreted. Its function is as follows. Inhibitor of lipoprotein binding to the low density lipoprotein (LDL) receptor, LDL receptor-related protein, and very low density lipoprotein (VLDL) receptor. Associates with high density lipoproteins (HDL) and the triacylglycerol-rich lipoproteins in the plasma and makes up about 10% of the protein of the VLDL and 2% of that of HDL. Appears to interfere directly with fatty acid uptake and is also the major plasma inhibitor of cholesteryl ester transfer protein (CETP). Modulates the interaction of APOE with beta-migrating VLDL and inhibits binding of beta-VLDL to the LDL receptor-related protein. Binds free fatty acids and reduces their intracellular esterification. The sequence is that of Apolipoprotein C-I (Apoc1) from Grammomys surdaster (African woodland thicket rat).